The chain runs to 277 residues: Phosphatidylserine decarboxylase proenzyme (277 aa).

Residues Asp-88, His-144, and Ser-242 each act as charge relay system; for autoendoproteolytic cleavage activity in the active site. Ser-242 acts as the Schiff-base intermediate with substrate; via pyruvic acid; for decarboxylase activity in catalysis. Ser-242 carries the post-translational modification Pyruvic acid (Ser); by autocatalysis.

It belongs to the phosphatidylserine decarboxylase family. PSD-B subfamily. Prokaryotic type I sub-subfamily. In terms of assembly, heterodimer of a large membrane-associated beta subunit and a small pyruvoyl-containing alpha subunit. Requires pyruvate as cofactor. Post-translationally, is synthesized initially as an inactive proenzyme. Formation of the active enzyme involves a self-maturation process in which the active site pyruvoyl group is generated from an internal serine residue via an autocatalytic post-translational modification. Two non-identical subunits are generated from the proenzyme in this reaction, and the pyruvate is formed at the N-terminus of the alpha chain, which is derived from the carboxyl end of the proenzyme. The autoendoproteolytic cleavage occurs by a canonical serine protease mechanism, in which the side chain hydroxyl group of the serine supplies its oxygen atom to form the C-terminus of the beta chain, while the remainder of the serine residue undergoes an oxidative deamination to produce ammonia and the pyruvoyl prosthetic group on the alpha chain. During this reaction, the Ser that is part of the protease active site of the proenzyme becomes the pyruvoyl prosthetic group, which constitutes an essential element of the active site of the mature decarboxylase.

The protein localises to the cell membrane. It catalyses the reaction a 1,2-diacyl-sn-glycero-3-phospho-L-serine + H(+) = a 1,2-diacyl-sn-glycero-3-phosphoethanolamine + CO2. Its pathway is phospholipid metabolism; phosphatidylethanolamine biosynthesis; phosphatidylethanolamine from CDP-diacylglycerol: step 2/2. Catalyzes the formation of phosphatidylethanolamine (PtdEtn) from phosphatidylserine (PtdSer). This Psychrobacter cryohalolentis (strain ATCC BAA-1226 / DSM 17306 / VKM B-2378 / K5) protein is Phosphatidylserine decarboxylase proenzyme.